The primary structure comprises 262 residues: Serine/arginine-rich splicing factor 10 (262 aa).

In terms of domain architecture, RRM spans T10–G88. Residues S23, S106, and S108 each carry the phosphoserine modification. Residues Y116–R126 show a composition bias toward basic and acidic residues. The interval Y116 to H262 is disordered. S129, S131, and S133 each carry phosphoserine. The span at F134–T150 shows a compositional bias: low complexity. Residues S158, S160, and R168 each carry the phosphoserine modification. Basic residues-rich tracts occupy residues F165–Q186 and K194–G207. The segment covering S209 to R234 has biased composition (basic and acidic residues). Over residues R252–H262 the composition is skewed to low complexity.

The protein belongs to the splicing factor SR family. The phosphorylated but not the dephosphorylated form interacts with TRA2B/SFRS10. The dephosphorylated form interacts with SNRNP70. Isoform 1 interacts with FUS C-terminus. Isoform 3 interacts with FUS C-terminus. Interacts with YTHDC1, leading to inhibit RNA-binding activity of SRSF10. Phosphorylated. Fully dephosphorylated in mitosis and partially dephosphorylated on heat shock. As to expression, widely expressed.

Its subcellular location is the nucleus speckle. It is found in the cytoplasm. Its function is as follows. Splicing factor that in its dephosphorylated form acts as a general repressor of pre-mRNA splicing. Seems to interfere with the U1 snRNP 5'-splice recognition of SNRNP70. Required for splicing repression in M-phase cells and after heat shock. Also acts as a splicing factor that specifically promotes exon skipping during alternative splicing. Interaction with YTHDC1, a RNA-binding protein that recognizes and binds N6-methyladenosine (m6A)-containing RNAs, prevents SRSF10 from binding to its mRNA-binding sites close to m6A-containing regions, leading to inhibit exon skipping during alternative splicing. May be involved in regulation of alternative splicing in neurons, with isoform 1 acting as a positive and isoform 3 as a negative regulator. This Homo sapiens (Human) protein is Serine/arginine-rich splicing factor 10 (SRSF10).